A 440-amino-acid chain; its full sequence is O-glycoside alpha-1,2-mannosyltransferase homolog 4 (440 aa).

Residues 1-35 are Cytoplasmic-facing; the sequence is MLGWNKHVFFSESRINFRCLLRKKLKKRCPLSARF. A helical; Signal-anchor for type II membrane protein membrane pass occupies residues 36-56; the sequence is VLVLLLIVLIFILKMGYKQLI. At 57–440 the chain is on the lumenal side; the sequence is YKLNHPPLRR…NLIGDGFLDE (384 aa). Glu-336 acts as the Nucleophile in catalysis.

The protein belongs to the glycosyltransferase 15 family.

The protein localises to the cytoplasm. Its subcellular location is the nucleus. It localises to the golgi apparatus membrane. In terms of biological role, probable mannosyltransferase involved in O-glycosylation of cell wall and secreted proteins. Transfers an alpha-D-mannosyl residue from GDP-mannose into lipid-linked oligosaccharide, forming an alpha-(1-&gt;2)-D-mannosyl-D-mannose linkage. In Schizosaccharomyces pombe (strain 972 / ATCC 24843) (Fission yeast), this protein is O-glycoside alpha-1,2-mannosyltransferase homolog 4 (omh4).